Reading from the N-terminus, the 4555-residue chain is Protocadherin Fat 3 (4555 aa).

Residues 1–31 (MGVTMRHCIDTRPPSCLIFLLLKLCATVSQG) form the signal peptide. At 32–4153 (LPGTGPLGFH…AGHSYVGKEE (4122 aa)) the chain is on the extracellular side. Cadherin domains follow at residues 43-157 (THAL…RPLF), 158-265 (SPTT…APII), 263-374 (PIIH…TPIK), 376-471 (EKDV…TPEF), 472-577 (QETL…SPLF), 578-680 (EKVA…SKSF), 726-830 (KSFP…SPVF), 831-935 (LQDS…SPAF), 936-1042 (IPSS…TPYF), 1043-1147 (PDFA…APLT), 1148-1253 (SEPI…KPQF), 1254-1358 (PEKV…SPIP), 1362-1459 (DEPF…GPEF), 1460-1565 (SQPH…SPYF), 1566-1768 (TNPL…PPVF), 1769-1882 (LFSQ…PPVF), 1883-1985 (TQAV…TQSF), 1982-2083 (TQSF…SPVF), 2084-2185 (VGLP…MPVF), 2186-2286 (DKPF…PPVF), 2287-2393 (DQPT…PPVF), 2394-2495 (NQLI…SPAF), 2496-2599 (SQST…APQF), 2600-2707 (MTLE…LPSF), 2708-2813 (TQSQ…KPVF), 2814-2923 (ETSS…APVF), 2924-3028 (AHEV…SPVC), 3029-3130 (DQVA…PPVF), 3131-3235 (SSNH…PPVF), 3236-3340 (ERRD…PPRF), 3341-3445 (SQDV…SPVF), 3446-3550 (TPAN…KPTA), and 3551-3652 (IPLE…TIRF). N-linked (GlcNAc...) asparagine glycosylation occurs at Asn-48. Asn-341 is a glycosylation site (N-linked (GlcNAc...) asparagine). Asn-481, Asn-562, Asn-667, Asn-799, Asn-879, Asn-898, and Asn-1006 each carry an N-linked (GlcNAc...) asparagine glycan. Asn-1367 and Asn-1429 each carry an N-linked (GlcNAc...) asparagine glycan. Residue Asn-1751 is glycosylated (N-linked (GlcNAc...) asparagine). N-linked (GlcNAc...) asparagine glycans are attached at residues Asn-1944, Asn-1993, and Asn-1996. N-linked (GlcNAc...) asparagine glycans are attached at residues Asn-2208, Asn-2292, Asn-2331, and Asn-2467. A glycan (N-linked (GlcNAc...) asparagine) is linked at Asn-2734. The N-linked (GlcNAc...) asparagine glycan is linked to Asn-3000. Asn-3201 is a glycosylation site (N-linked (GlcNAc...) asparagine). Residues Asn-3449, Asn-3618, and Asn-3741 are each glycosylated (N-linked (GlcNAc...) asparagine). In terms of domain architecture, EGF-like 1 spans 3794–3832 (SNDPCVEKPCPEDMQCVGYEASRRPFLCQCPPGKLGECS). 3 disulfides stabilise this stretch: Cys-3798–Cys-3809, Cys-3803–Cys-3821, and Cys-3823–Cys-3831. In terms of domain architecture, Laminin G-like spans 3834 to 4017 (HTSLSFAGNS…VGLTELKLGC (184 aa)). Asn-3926 carries N-linked (GlcNAc...) asparagine glycosylation. 10 disulfides stabilise this stretch: Cys-3984-Cys-4017, Cys-4024-Cys-4035, Cys-4029-Cys-4045, Cys-4047-Cys-4056, Cys-4063-Cys-4074, Cys-4068-Cys-4083, Cys-4085-Cys-4094, Cys-4101-Cys-4112, Cys-4106-Cys-4121, and Cys-4123-Cys-4132. 2 consecutive EGF-like domains span residues 4020–4057 (YPDA…TNCE) and 4059–4095 (EITA…VTCE). One can recognise an EGF-like 4; calcium-binding domain in the interval 4097–4133 (DVDECEREECENGGSCVNLFGSFFCNCTPGYVGQYCG). A helical membrane pass occupies residues 4154-4174 (LIGIAVVLFVIFTLIVLFIVF). Over 4175-4555 (RKKVFRKNYS…FVETQHQTQV (381 aa)) the chain is Cytoplasmic. Residues 4326 to 4343 (SNKGSNSEVQSLNSFQSD) show a composition bias toward polar residues. Disordered stretches follow at residues 4326–4347 (SNKG…SGDD), 4395–4424 (GGYD…LPED), and 4452–4472 (PRFH…TDLG). Omega-N-methylarginine is present on residues Arg-4508 and Arg-4518.

As to expression, restricted to the nervous system. Abundantly expressed in the fetal brain.

Its subcellular location is the membrane. In terms of biological role, may play a role in the interactions between neurites derived from specific subsets of neurons during development. This chain is Protocadherin Fat 3 (Fat3), found in Rattus norvegicus (Rat).